The sequence spans 305 residues: tRNA dimethylallyltransferase (305 aa).

An ATP-binding site is contributed by G9–T16. T11–T16 is a binding site for substrate. Interaction with substrate tRNA stretches follow at residues D34–Q37 and Q158–R162.

It belongs to the IPP transferase family. Monomer. It depends on Mg(2+) as a cofactor.

The enzyme catalyses adenosine(37) in tRNA + dimethylallyl diphosphate = N(6)-dimethylallyladenosine(37) in tRNA + diphosphate. Catalyzes the transfer of a dimethylallyl group onto the adenine at position 37 in tRNAs that read codons beginning with uridine, leading to the formation of N6-(dimethylallyl)adenosine (i(6)A). In Oleidesulfovibrio alaskensis (strain ATCC BAA-1058 / DSM 17464 / G20) (Desulfovibrio alaskensis), this protein is tRNA dimethylallyltransferase.